The primary structure comprises 256 residues: Thiazole synthase (256 aa).

K95 serves as the catalytic Schiff-base intermediate with DXP. Residues G156, 182 to 183 (AG), and 204 to 205 (NT) each bind 1-deoxy-D-xylulose 5-phosphate.

Belongs to the ThiG family. Homotetramer. Forms heterodimers with either ThiH or ThiS.

The protein resides in the cytoplasm. The enzyme catalyses [ThiS sulfur-carrier protein]-C-terminal-Gly-aminoethanethioate + 2-iminoacetate + 1-deoxy-D-xylulose 5-phosphate = [ThiS sulfur-carrier protein]-C-terminal Gly-Gly + 2-[(2R,5Z)-2-carboxy-4-methylthiazol-5(2H)-ylidene]ethyl phosphate + 2 H2O + H(+). It participates in cofactor biosynthesis; thiamine diphosphate biosynthesis. Functionally, catalyzes the rearrangement of 1-deoxy-D-xylulose 5-phosphate (DXP) to produce the thiazole phosphate moiety of thiamine. Sulfur is provided by the thiocarboxylate moiety of the carrier protein ThiS. In vitro, sulfur can be provided by H(2)S. This chain is Thiazole synthase, found in Salmonella enteritidis PT4 (strain P125109).